The primary structure comprises 153 residues: Ribosome maturation factor RimP (153 aa).

Belongs to the RimP family.

Its subcellular location is the cytoplasm. Functionally, required for maturation of 30S ribosomal subunits. This is Ribosome maturation factor RimP from Trichormus variabilis (strain ATCC 29413 / PCC 7937) (Anabaena variabilis).